Consider the following 62-residue polypeptide: Photosystem II reaction center protein Z (62 aa).

The next 2 membrane-spanning stretches (helical) occupy residues 8–28 (AVFALIATSSILLISVPVVFA) and 41–61 (FSGTSLWIGLVFLVAILNSLI).

It belongs to the PsbZ family. As to quaternary structure, PSII is composed of 1 copy each of membrane proteins PsbA, PsbB, PsbC, PsbD, PsbE, PsbF, PsbH, PsbI, PsbJ, PsbK, PsbL, PsbM, PsbT, PsbY, PsbZ, Psb30/Ycf12, at least 3 peripheral proteins of the oxygen-evolving complex and a large number of cofactors. It forms dimeric complexes.

The protein localises to the plastid. It localises to the chloroplast thylakoid membrane. In terms of biological role, may control the interaction of photosystem II (PSII) cores with the light-harvesting antenna, regulates electron flow through the 2 photosystem reaction centers. PSII is a light-driven water plastoquinone oxidoreductase, using light energy to abstract electrons from H(2)O, generating a proton gradient subsequently used for ATP formation. The protein is Photosystem II reaction center protein Z of Calycanthus floridus var. glaucus (Eastern sweetshrub).